We begin with the raw amino-acid sequence, 517 residues long: Cytochrome P450 monooxygenase TRI4 (517 aa).

The chain crosses the membrane as a helical span at residues 15–37 (AVGAAVAVGALYFFCQCFYNLYL). N-linked (GlcNAc...) asparagine glycosylation is present at asparagine 444. Cysteine 452 lines the heme pocket.

The protein belongs to the cytochrome P450 family. It depends on heme as a cofactor.

It is found in the membrane. It functions in the pathway sesquiterpene biosynthesis; trichothecene biosynthesis. Its function is as follows. Cytochrome P450 monooxygenase; part of the gene cluster that mediates the production of the antimicrobial trichothecene harzianum A (HA) that plays a role in Botrytis cinerea antagonistic activity and plant defense priming. The biosynthesis of harzianum A begins with the cyclization of farnesyl diphosphate to trichodiene and is catalyzed by the trichodiene synthase TRI5. Trichodiene undergoes a series of oxygenations catalyzed by the cytochrome P450 monooxygenase TRI4. TRI4 controls the addition of 3 oxygens at C-2, C-11, and the C-12, C-13-epoxide to form the intermediate isotrichodiol. Isotrichodiol then undergoes a non-enzymatic isomerization and cyclization to form 12,13-epoxytrichothec-9-ene (EPT) which is further converted to trichodermol by the cytochrome P450 monooxygenase TRI11 via C-4 hydroxylation. The last step of HA synthesis is esterification of an octatriendioyl moiety to the C-4 oxygen of trichodermol. The octatriendioyl moiety is probably produced by the polyketide synthase TRI17 and the esterification performed by the trichothecene O-acetyltransferase TRI3. The sequence is that of Cytochrome P450 monooxygenase TRI4 from Trichoderma arundinaceum.